The sequence spans 285 residues: Ribosomal RNA small subunit methyltransferase A (285 aa).

Positions 11, 13, 37, 57, 85, and 105 each coordinate S-adenosyl-L-methionine.

The protein belongs to the class I-like SAM-binding methyltransferase superfamily. rRNA adenine N(6)-methyltransferase family. RsmA subfamily.

It localises to the cytoplasm. The catalysed reaction is adenosine(1518)/adenosine(1519) in 16S rRNA + 4 S-adenosyl-L-methionine = N(6)-dimethyladenosine(1518)/N(6)-dimethyladenosine(1519) in 16S rRNA + 4 S-adenosyl-L-homocysteine + 4 H(+). Specifically dimethylates two adjacent adenosines (A1518 and A1519) in the loop of a conserved hairpin near the 3'-end of 16S rRNA in the 30S particle. May play a critical role in biogenesis of 30S subunits. The chain is Ribosomal RNA small subunit methyltransferase A from Campylobacter curvus (strain 525.92).